A 309-amino-acid chain; its full sequence is Aspartate carbamoyltransferase catalytic subunit (309 aa).

Arginine 55 and threonine 56 together coordinate carbamoyl phosphate. Position 85 (lysine 85) interacts with L-aspartate. Carbamoyl phosphate contacts are provided by arginine 106, histidine 135, and glutamine 138. L-aspartate is bound by residues arginine 168 and arginine 230. Leucine 268 and proline 269 together coordinate carbamoyl phosphate.

Belongs to the aspartate/ornithine carbamoyltransferase superfamily. ATCase family. In terms of assembly, heterododecamer (2C3:3R2) of six catalytic PyrB chains organized as two trimers (C3), and six regulatory PyrI chains organized as three dimers (R2).

The enzyme catalyses carbamoyl phosphate + L-aspartate = N-carbamoyl-L-aspartate + phosphate + H(+). The protein operates within pyrimidine metabolism; UMP biosynthesis via de novo pathway; (S)-dihydroorotate from bicarbonate: step 2/3. In terms of biological role, catalyzes the condensation of carbamoyl phosphate and aspartate to form carbamoyl aspartate and inorganic phosphate, the committed step in the de novo pyrimidine nucleotide biosynthesis pathway. This Aliivibrio salmonicida (strain LFI1238) (Vibrio salmonicida (strain LFI1238)) protein is Aspartate carbamoyltransferase catalytic subunit.